The sequence spans 585 residues: A-type ATP synthase subunit A (585 aa).

ATP is bound at residue 237-244 (GPFGSGKT).

Belongs to the ATPase alpha/beta chains family. In terms of assembly, has multiple subunits with at least A(3), B(3), C, D, E, F, H, I and proteolipid K(x).

It is found in the cell membrane. It carries out the reaction ATP + H2O + 4 H(+)(in) = ADP + phosphate + 5 H(+)(out). Component of the A-type ATP synthase that produces ATP from ADP in the presence of a proton gradient across the membrane. The A chain is the catalytic subunit. This chain is A-type ATP synthase subunit A, found in Natronomonas pharaonis (strain ATCC 35678 / DSM 2160 / CIP 103997 / JCM 8858 / NBRC 14720 / NCIMB 2260 / Gabara) (Halobacterium pharaonis).